Here is a 193-residue protein sequence, read N- to C-terminus: uncharacterized protein (193 aa).

Residues 1–26 form the signal peptide; the sequence is MRNVFVGALCMCGMSFVFSDSVRSAA.

This is an uncharacterized protein from Treponema pallidum (strain Nichols).